The chain runs to 379 residues: Queuine tRNA-ribosyltransferase (379 aa).

Catalysis depends on Asp-94, which acts as the Proton acceptor. Residues 94 to 98 (DSGGF), Asp-148, Gln-191, and Gly-218 contribute to the substrate site. Residues 249 to 255 (GVGSPDS) form an RNA binding region. The active-site Nucleophile is the Asp-268. The interval 273–277 (TRIAR) is RNA binding; important for wobble base 34 recognition. Positions 306, 308, 311, and 337 each coordinate Zn(2+).

It belongs to the queuine tRNA-ribosyltransferase family. As to quaternary structure, homodimer. Within each dimer, one monomer is responsible for RNA recognition and catalysis, while the other monomer binds to the replacement base PreQ1. It depends on Zn(2+) as a cofactor.

It catalyses the reaction 7-aminomethyl-7-carbaguanine + guanosine(34) in tRNA = 7-aminomethyl-7-carbaguanosine(34) in tRNA + guanine. It functions in the pathway tRNA modification; tRNA-queuosine biosynthesis. Functionally, catalyzes the base-exchange of a guanine (G) residue with the queuine precursor 7-aminomethyl-7-deazaguanine (PreQ1) at position 34 (anticodon wobble position) in tRNAs with GU(N) anticodons (tRNA-Asp, -Asn, -His and -Tyr). Catalysis occurs through a double-displacement mechanism. The nucleophile active site attacks the C1' of nucleotide 34 to detach the guanine base from the RNA, forming a covalent enzyme-RNA intermediate. The proton acceptor active site deprotonates the incoming PreQ1, allowing a nucleophilic attack on the C1' of the ribose to form the product. After dissociation, two additional enzymatic reactions on the tRNA convert PreQ1 to queuine (Q), resulting in the hypermodified nucleoside queuosine (7-(((4,5-cis-dihydroxy-2-cyclopenten-1-yl)amino)methyl)-7-deazaguanosine). This is Queuine tRNA-ribosyltransferase from Bacillus cereus (strain Q1).